The sequence spans 32 residues: Cytochrome b6-f complex subunit 7 (32 aa).

Residues 9 to 27 (AVLSSVLVLVGLAIGFLLL) form a helical membrane-spanning segment.

Belongs to the PetM family. In terms of assembly, the 4 large subunits of the cytochrome b6-f complex are cytochrome b6, subunit IV (17 kDa polypeptide, PetD), cytochrome f and the Rieske protein, while the 4 small subunits are PetG, PetL, PetM and PetN. The complex functions as a dimer.

The protein localises to the plastid. It localises to the chloroplast thylakoid membrane. In terms of biological role, component of the cytochrome b6-f complex, which mediates electron transfer between photosystem II (PSII) and photosystem I (PSI), cyclic electron flow around PSI, and state transitions. This Pyropia yezoensis (Susabi-nori) protein is Cytochrome b6-f complex subunit 7.